A 386-amino-acid chain; its full sequence is MNIHEYQAKEILRKYGVPTSTGLVVTKTEKINETIDKLNTEVYVVKAQIHAGGRGKAGGVKVVKSKEEAKKVAHDMFGINLVTHQTGPQGQKVNRLYIESGCEILKEYYFSIVFDRSASCITFIASTEGGVDIEEVAEKTPEKIIKFSVDPATGLQDFHMRGIAYELGFKDNQAKQMKEIVKSVYNAFIETDAAQIEINPLIVNSDGNLLALDAKITFDDNGLLRHPNITAMRDHDEEDPLETRAANAGLSYVKMDGNIGCMVNGAGLAMATMDIIKLYGASPANFLDVGGGADRERVKEALKIILSDKAVQGILVNIFGGIMRCDIIAEGIIAAAKDIGIKVPLVVRLAGTNVEKGKEILSNSGLEIIPAHDLADAANKIVEAIR.

In terms of domain architecture, ATP-grasp spans 9-244 (KEILRKYGVP…HDEEDPLETR (236 aa)). ATP contacts are provided by residues Lys46, 53-55 (GRG), Glu99, Cys102, and Glu107. Mg(2+) contacts are provided by Asn199 and Asp213. Residues Asn264 and 321-323 (GIM) contribute to the substrate site.

The protein belongs to the succinate/malate CoA ligase beta subunit family. In terms of assembly, heterotetramer of two alpha and two beta subunits. Mg(2+) serves as cofactor.

The catalysed reaction is succinate + ATP + CoA = succinyl-CoA + ADP + phosphate. It catalyses the reaction GTP + succinate + CoA = succinyl-CoA + GDP + phosphate. It participates in carbohydrate metabolism; tricarboxylic acid cycle; succinate from succinyl-CoA (ligase route): step 1/1. Functionally, succinyl-CoA synthetase functions in the citric acid cycle (TCA), coupling the hydrolysis of succinyl-CoA to the synthesis of either ATP or GTP and thus represents the only step of substrate-level phosphorylation in the TCA. The beta subunit provides nucleotide specificity of the enzyme and binds the substrate succinate, while the binding sites for coenzyme A and phosphate are found in the alpha subunit. The chain is Succinate--CoA ligase [ADP-forming] subunit beta from Rickettsia rickettsii (strain Iowa).